A 414-amino-acid chain; its full sequence is Probable acetyl-CoA acetyltransferase (414 aa).

The Acyl-thioester intermediate role is filled by Cys-110. CoA is bound by residues Tyr-205, 244–246, and Lys-249; that span reads KVL. Tyr-205 contacts K(+). The K(+) site is built by Ala-266 and Ala-268. Position 269 (Ser-269) interacts with CoA. Val-366 is a K(+) binding site. Catalysis depends on proton acceptor residues His-370 and Cys-400.

Belongs to the thiolase-like superfamily. Thiolase family.

It carries out the reaction 2 acetyl-CoA = acetoacetyl-CoA + CoA. The chain is Probable acetyl-CoA acetyltransferase from Dictyostelium discoideum (Social amoeba).